The following is a 277-amino-acid chain: Large ribosomal subunit protein uL2 (277 aa).

The tract at residues 226–277 is disordered; sequence NPIDHPHGGGEGRTSGGRHPVTPWGKPTKGKKTRSNKSTNKFILISRHKRKK.

It belongs to the universal ribosomal protein uL2 family. As to quaternary structure, part of the 50S ribosomal subunit. Forms a bridge to the 30S subunit in the 70S ribosome.

One of the primary rRNA binding proteins. Required for association of the 30S and 50S subunits to form the 70S ribosome, for tRNA binding and peptide bond formation. It has been suggested to have peptidyltransferase activity; this is somewhat controversial. Makes several contacts with the 16S rRNA in the 70S ribosome. The protein is Large ribosomal subunit protein uL2 of Rhodopseudomonas palustris (strain BisA53).